The chain runs to 637 residues: Probable potassium transport system protein Kup 2 (637 aa).

The interval 1-21 (MDLASRDSEAETVEQSSHSGA) is disordered. Helical transmembrane passes span 29 to 49 (LMLG…IYAF), 68 to 88 (VLSL…VAFV), 116 to 136 (LILA…IITP), 150 to 170 (VTPT…AILF), 180 to 200 (VAAV…VAGL), 228 to 248 (AAFV…ALYV), 258 to 278 (IVLA…FGQG), 300 to 320 (ALMP…QAVI), 359 to 379 (LLVA…SSLA), 381 to 401 (AYGI…FVVM), 409 to 429 (LAVA…FFLA), and 434 to 454 (IFEG…IMWT).

It belongs to the HAK/KUP transporter (TC 2.A.72) family.

The protein resides in the cell inner membrane. The catalysed reaction is K(+)(in) + H(+)(in) = K(+)(out) + H(+)(out). Transport of potassium into the cell. Likely operates as a K(+):H(+) symporter. This chain is Probable potassium transport system protein Kup 2, found in Mesorhizobium japonicum (strain LMG 29417 / CECT 9101 / MAFF 303099) (Mesorhizobium loti (strain MAFF 303099)).